The following is a 757-amino-acid chain: MLGMCRGRRKFVAASLALIFIPALTWLYLSSANITVKPLPLSPLDPQSSAVVGAAAEHQSLELRLRDVEEHNNALRREISRTPRVPTHSSHPSSSRHGNQLHTHSTEEGTGDSEAKKGAAAGNSSDCVPQPVVKKCETIHIAIVCAGYNASRDVVTLVKSVLFHRRNPLHFHIITDSIARKILADLFHTWMVPAVHVNFYDADELKSEVSWIPNKHYSGIHGLMKLVLTKTLPSDLEKVIVLDTDITFATDIAELWVVFHKFKGQQVLGLVENQSDWYLGNLWKNHRPWPALGRGFNTGVILLLLDRLRKLKWEQMWRLTAERELMSMLSTSLADQDIFNAVIKQNPFLVHQLPCYWNVQLSDHTRSEKCYKDVSDLKVIHWNSPKKLRVKNKHVEFFRNLYLTFLEYDGNLLRRELFGCPSETDHNSENLQKTLSELDEDDPCYEFRRERFTVHRTHVYFLHYEYEPTVDNTDVTLVAQLSMDRLQMLEAICKHWEGPISLALYLSDAEAQQFLRYAQGSEVLMSRSNVGYHIVYKEGQFYPVNLLRNVAMGQVNTPYMFLSDIDFLPMYGLYEYLRKSVVQLDMGNTKKALVVPAFETLRYRLSFPKSKAELLSQLDMGTLFTFRYHVWTKGHAPTDFAKWRTATTPYRVQWEADFEPYVMVRRESPEYDRRFVGFGWNKVAHIMELDAQEYEFVVLPNAYMIHMPHAPSFDITKFRSNKQYRACLKTLKEEFQQNMSRRYGFAALKYMTVDNNS.

At Met-1–Lys-10 the chain is on the cytoplasmic side. A helical; Signal-anchor for type II membrane protein membrane pass occupies residues Phe-11–Ser-31. At Ala-32 to Ser-757 the chain is on the lumenal side. Residues Ala-50–Thr-82 adopt a coiled-coil conformation. The tract at residues Arg-76 to Cys-127 is disordered. The segment covering Thr-82 to His-97 has biased composition (low complexity). Asn-123 and Asn-149 each carry an N-linked (GlcNAc...) asparagine glycan. Positions Ile-139–Arg-414 are xylosyltransferase activity. Residues Asp-243 and Asp-245 each contribute to the Mn(2+) site. A glycan (N-linked (GlcNAc...) asparagine) is linked at Asn-273. The glucuronyltransferase activity stretch occupies residues Arg-415–Ser-757. Residues Asp-564 and Asp-566 each coordinate Mn(2+). An N-linked (GlcNAc...) asparagine glycan is attached at Asn-738.

The protein in the C-terminal section; belongs to the glycosyltransferase 49 family. It in the N-terminal section; belongs to the glycosyltransferase 8 family. It depends on Mn(2+) as a cofactor.

The protein resides in the golgi apparatus membrane. It catalyses the reaction 3-O-[beta-D-GlcA-(1-&gt;3)-beta-D-Xyl-(1-&gt;4)-Rib-ol-P-Rib-ol-P-3-beta-D-GalNAc-(1-&gt;3)-beta-D-GlcNAc-(1-&gt;4)-(O-6-P-alpha-D-Man)]-Thr-[protein] + UDP-alpha-D-xylose = 3-O-[alpha-D-Xyl-(1-&gt;3)-beta-D-GlcA-(1-&gt;4)-beta-D-Xyl-(1-&gt;4)-Rib-ol-P-Rib-ol-P-3-beta-D-GalNAc-(1-&gt;3)-beta-D-GlcNAc-(1-&gt;4)-(O-6-P-alpha-D-Man)]-Thr-[protein] + UDP + H(+). The catalysed reaction is 3-O-{(1-&gt;[3)-alpha-D-Xyl-(1-&gt;3)-beta-D-GlcA-(1-&gt;](n)-4)-beta-D-Xyl-(1-&gt;4)-Rib-ol-P-Rib-ol-P-3-beta-D-GalNAc-(1-&gt;3)-beta-D-GlcNAc-(1-&gt;4)-O-6-P-alpha-D-Man}-L-Thr-[protein] + UDP-alpha-D-glucuronate = 3-O-{beta-D-GlcA-(1-&gt;[3)-alpha-D-Xyl-(1-&gt;3)-beta-D-GlcA-(1-&gt;](n)-4)-beta-D-Xyl-(1-&gt;4)-Rib-ol-P-Rib-ol-P-3-beta-D-GalNAc-(1-&gt;3)-beta-D-GlcNAc-(1-&gt;4)-O-6-P-alpha-D-Man}-L-Thr-[protein] + UDP + H(+). The enzyme catalyses 3-O-{beta-D-GlcA-(1-&gt;[3)-alpha-D-Xyl-(1-&gt;3)-beta-D-GlcA-(1-&gt;](n)-4)-beta-D-Xyl-(1-&gt;4)-Rib-ol-P-Rib-ol-P-3-beta-D-GalNAc-(1-&gt;3)-beta-D-GlcNAc-(1-&gt;4)-O-6-P-alpha-D-Man}-L-Thr-[protein] + UDP-alpha-D-xylose = 3-O-{(1-&gt;[3)-alpha-D-Xyl-(1-&gt;3)-beta-D-GlcA-(1-&gt;](n+1)-4)-beta-D-Xyl-(1-&gt;4)-Rib-ol-P-Rib-ol-P-3-beta-D-GalNAc-(1-&gt;3)-beta-D-GlcNAc-(1-&gt;4)-O-6-P-alpha-D-Man}-L-Thr-[protein] + UDP + H(+). Its pathway is protein modification; protein glycosylation. Its function is as follows. Bifunctional glycosyltransferase with both alpha-1,3-xylosyltransferase and beta-1,3-glucuronyltransferase activities involved in the maturation of alpha-dystroglycan (DAG1) by glycosylation leading to DAG1 binding to laminin G-like domain-containing extracellular proteins with high affinity. Elongates the glucuronyl-beta-1,4-xylose-beta disaccharide primer structure initiated by B4GAT1 by adding repeating units [-3-Xylose-alpha-1,3-GlcA-beta-1-] to produce a heteropolysaccharide. Requires the phosphorylation of core M3 (O-mannosyl trisaccharide) by POMK to elongate the glucuronyl-beta-1,4-xylose-beta disaccharide primer. Plays a key role in skeletal muscle function and regeneration. The protein is Xylosyl- and glucuronyltransferase LARGE1 of Danio rerio (Zebrafish).